The sequence spans 864 residues: Carbohydrate-responsive element-binding protein (864 aa).

Disordered stretches follow at residues 15–41 and 53–77; these read PRVVPSPDSDSDTDLEDPSPRRSAGGL and MVSSPHSDSLTRRRDQEGPVGLADF. Residues S20, S23, and S25 each carry the phosphoserine modification. Residue T27 is modified to Phosphothreonine. At S196 the chain carries Phosphoserine. Disordered regions lie at residues 332–397, 449–468, 489–533, 547–570, and 583–602; these read SSGI…APGP, PGVSTLPAPTTFVPTPQPGP, PHFT…TARD, PEQALEPPTMPGTLLRPPESPQDT, and PIPAPTPPRPPPGPATLAPP. Residues 351 to 368 are compositionally biased toward polar residues; sequence GMTPHSGNTRLQARNSCS. Residues 513–531 are compositionally biased toward low complexity; sequence ASPPTLASATASPTATATA. At S566 the chain carries Phosphoserine; by AMPK. The segment covering 583 to 596 has biased composition (pro residues); sequence PIPAPTPPRPPPGP. Residues S614, S626, and S643 each carry the phosphoserine modification. One can recognise a bHLH domain in the interval 661–715; the sequence is NRRITHISAEQKRRFNIKLGFDTLHGLVSTLSAQPSLKVSKATTLQKTAEYILML. The segment at 715 to 736 is leucine-zipper; the sequence is LQQERAAMQEEAQQLRDEIEEL.

Binds DNA as a heterodimer with TCFL4/MLX. In terms of processing, phosphorylation at Ser-566 by AMPK inactivates the DNA-binding activity. In terms of tissue distribution, expressed in the ventricular and intermediate zones of the developing spinal cord of 12.5 dpc embryos. In later embryos expressed in a variety of tissues.

It localises to the nucleus. Its function is as follows. Transcriptional repressor. Binds to the canonical and non-canonical E box sequences 5'-CACGTG-3'. The polypeptide is Carbohydrate-responsive element-binding protein (Mlxipl) (Mus musculus (Mouse)).